We begin with the raw amino-acid sequence, 909 residues long: Protein virilizer (909 aa).

The segment covering 746–784 has biased composition (polar residues); that stretch reads STSKNTNTNVSKQQQQPQNSTPCSSNRFLFNKSSLISQE. The tract at residues 746–824 is disordered; it reads STSKNTNTNV…TNMTRQPTTL (79 aa). The segment covering 785 to 799 has biased composition (low complexity); the sequence is SNGSNNNSGTQGPGS. The span at 800-810 shows a compositional bias: polar residues; that stretch reads MNESYSLDNSF. Positions 811-824 are enriched in low complexity; it reads NTTNTNMTRQPTTL. Phosphoserine is present on residues Ser856 and Ser898.

It belongs to the vir family. In terms of assembly, component of the MIS (mRNA N6-methyladenosine (m6A) methylation) complex, at least composed of IME4, KAR4, MUM2, SLZ1, and VIR1. Interacts with KAR4. Interacts with SLZ1. Interacts with MUM2. Interacts with IME4.

It is found in the cytoplasm. The protein localises to the nucleus. It localises to the nucleolus. Component of the MIS complex, a complex that mediates N6-methyladenosine (m6A) methylation of meiotic mRNAs and is required for initiation of meiosis, progression through the meiotic divisions and sporulation. In the complex, performs a scaffolding role stabilizing the other complex members. This Saccharomyces cerevisiae (strain ATCC 204508 / S288c) (Baker's yeast) protein is Protein virilizer.